Consider the following 2303-residue polypeptide: Genome polyprotein (2303 aa).

Residues 3–14 (CKHGYPDVCPIC) fold into a zinc finger. Residues 30–46 (DGEWFPTDLLCVDLDDD) are acidic. Residues 60–73 (MEWTDVPLVCDTVM) are theilo. Positions 73–93 (MEPQGNASSSDKSNSQSSGNE) are disordered. Gly-77 carries the N-myristoyl glycine; by host lipid modification. The span at 80–90 (SSSDKSNSQSS) shows a compositional bias: low complexity. A disulfide bridge links Cys-501 with Cys-503. A host EIF4E binding region spans residues 1041–1047 (YYKQRLI). Residues 1283–1448 (IPLASLCEKF…CKTPAGMLDI (166 aa)) form the SF3 helicase domain. 1312–1319 (GAAGQGKS) lines the ATP pocket. Residue Tyr-1608 is modified to O-(5'-phospho-RNA)-tyrosine. The region spanning 1636 to 1829 (NPVMDFELFC…AATIITRELI (194 aa)) is the Peptidase C3 domain. Active-site for protease 3C activity residues include His-1680, Asp-1714, and Cys-1793. Positions 2071–2189 (NYVYDVDYSN…GTNYQIDFNL (119 aa)) constitute a RdRp catalytic domain. Active-site for RdRp activity residues include Asp-2077 and Asp-2175.

This sequence belongs to the picornaviruses polyprotein family. Interacts with host EIF4E. Interacts with the leader protein. As to quaternary structure, interacts with host RAN; the complex L-RAN recruits cellular kinases responsible for the L-induced nucleocytoplasmic trafficking inhibition. The complex L-RAN can further bind to the host exportins XPO1/CRM1 and CSE1L/CAS. Interacts with the protein 2A. Interacts with host RNASEL; this interaction prevents RNASEL activation by its substrate 2'-5' oligoadenylates. In terms of processing, phosphorylated. Post-translationally, specific enzymatic cleavages by the viral protease in vivo yield a variety of precursors and mature proteins. The polyprotein seems to be cotranslationally cleaved at the 2A/2B junction by a ribosomal skip from one codon to the next without formation of a peptide bond. This process would release the P1-2A peptide from the translational complex. During virion maturation, immature virions are rendered infectious following cleavage of VP0 into VP4 and VP2. This maturation seems to be an autocatalytic event triggered by the presence of RNA in the capsid and is followed by a conformational change of the particle. In terms of processing, uridylylated by the polymerase and is covalently linked to the 5'-end of genomic RNA. This uridylylated form acts as a nucleotide-peptide primer for the polymerase. Post-translationally, myristoylation is required during RNA encapsidation and formation of the mature virus particle.

It localises to the virion. Its subcellular location is the host cytoplasm. The protein resides in the host nucleus. It is found in the host nucleolus. The protein localises to the host cytoplasmic vesicle membrane. It catalyses the reaction RNA(n) + a ribonucleoside 5'-triphosphate = RNA(n+1) + diphosphate. It carries out the reaction ATP + H2O = ADP + phosphate + H(+). The catalysed reaction is Selective cleavage of Gln-|-Gly bond in the poliovirus polyprotein. In other picornavirus reactions Glu may be substituted for Gln, and Ser or Thr for Gly.. Functionally, forms a complex with host RAN and probably binds to exportins carrying activated MAPK in order to mediate the hyperphosphorylation of host Phe/Gly containing nuclear pore proteins (Nups) resulting in cessation of active nucleocytoplasmic transport. Proteins with NLS signals fail to import, cellular mRNAs fail to export, and some proteins small enough for diffusion are not retained anymore (efflux). The resulting inhibition of cellular protein synthesis serves to ensure maximal viral gene expression and to evade host immune response. The leader protein also inhibits host interferon regulatory factor 3 (IRF3) dimerization, thereby blocking the transcriptional activation of IFN genes. Binds to host RNase L thereby preventing its activation by 2'-5' oligoadenylates in order to counteract the antiviral interferon-inducible OAS/RNase L pathway. Inhibits the integrated stress response (ISR) in the infected cell. Inhibits the host EIF2AK2/PKR by rendering this kinase unable to detect double-stranded RNA. Also impairs host stress granule formation probably by acting on a step downstream of EIF2AK2/PKR activation. Forms an icosahedral capsid of pseudo T=3 symmetry with capsid proteins VP2 and VP3. Together they form an icosahedral capsid composed of 60 copies of each VP1, VP2, and VP3, with a diameter of approximately 300 Angstroms. VP4 lies on the inner surface of the protein shell formed by VP1, VP2 and VP3. All the three latter proteins contain a beta-sheet structure called beta-barrel jelly roll. VP1 is situated at the 12 fivefold axes, whereas VP2 and VP3 are located at the quasi-sixfold axes. In terms of biological role, lies on the inner surface of the capsid shell. After binding to the host receptor, the capsid undergoes conformational changes. Capsid protein VP4 is released, capsid protein VP1 N-terminus is externalized, and together, they shape a pore in the host membrane through which the viral genome is translocated into the host cell cytoplasm. After genome has been released, the channel shrinks. Its function is as follows. VP0 precursor is a component of immature procapsids. Functionally, involved in host translation shutoff by inhibiting cap-dependent mRNA translation. Nuclear localization is required for this function. The resulting inhibition of cellular protein synthesis serves to ensure maximal viral gene expression and to evade host immune response. Inhibits the phosphorylation of the leader protein. Binds to the RNA stem-loop essential for the ribosomal frameshift event and trans-activates the production of protein 2B*. Affects membrane integrity and causes an increase in membrane permeability. In terms of biological role, associates with and induces structural rearrangements of intracellular membranes. It displays RNA-binding, nucleotide binding and NTPase activities. Its function is as follows. Serves as membrane anchor via its hydrophobic domain. Functionally, forms a primer, VPg-pU, which is utilized by the polymerase for the initiation of RNA chains. Cysteine protease that generates mature viral proteins from the precursor polyprotein. In addition to its proteolytic activity, it binds to viral RNA, and thus influences viral genome replication. RNA and substrate cooperatively bind to the protease. Cleaves host PABP1, this cleavage is important for viral replication. In terms of biological role, replicates the genomic and antigenomic RNAs by recognizing replications specific signals. Performs VPg uridylylation. The sequence is that of Genome polyprotein from Mus musculus (Mouse).